Reading from the N-terminus, the 84-residue chain is Small ribosomal subunit protein bS20 (84 aa).

Positions 1–32 (MPRHESAKKRMRQNEKRQKRNKSQKSRVRTKI) are disordered.

It belongs to the bacterial ribosomal protein bS20 family.

In terms of biological role, binds directly to 16S ribosomal RNA. This chain is Small ribosomal subunit protein bS20, found in Salinibacter ruber (strain DSM 13855 / M31).